Here is a 206-residue protein sequence, read N- to C-terminus: Large ribosomal subunit protein uL4 (206 aa).

A disordered region spans residues 47-71; the sequence is TRAQKGRSEVAGSTRKQWRQKGTGR.

This sequence belongs to the universal ribosomal protein uL4 family. In terms of assembly, part of the 50S ribosomal subunit.

Its function is as follows. One of the primary rRNA binding proteins, this protein initially binds near the 5'-end of the 23S rRNA. It is important during the early stages of 50S assembly. It makes multiple contacts with different domains of the 23S rRNA in the assembled 50S subunit and ribosome. Forms part of the polypeptide exit tunnel. The protein is Large ribosomal subunit protein uL4 of Nitrosomonas eutropha (strain DSM 101675 / C91 / Nm57).